Consider the following 189-residue polypeptide: RNA-binding protein (189 aa).

The C4-type zinc-finger motif lies at 55–69; it reads CICPSSNHLVDDCVC. Positions 114–189 are disordered; it reads FLTSVNPGES…DANTRKSKRK (76 aa). Basic and acidic residues predominate over residues 158–167; it reads SSSERKRKEY. A compositionally biased stretch (low complexity) spans 168-180; sequence SSNSETDLSSDSD.

It belongs to the phytoreovirus RNA-binding protein family.

It localises to the host cytoplasm. In terms of biological role, constituent of viral factories. Binds to ssRNA and dsRNA. The polypeptide is RNA-binding protein (Alopecurus aequalis (Barnyard grass)).